We begin with the raw amino-acid sequence, 142 residues long: Transcriptional regulator MraZ (142 aa).

SpoVT-AbrB domains are found at residues 5–51 (ASAL…PRPE) and 77–120 (AADV…DAAT).

Belongs to the MraZ family. In terms of assembly, forms oligomers.

It is found in the cytoplasm. Its subcellular location is the nucleoid. This is Transcriptional regulator MraZ from Ralstonia pickettii (strain 12J).